A 112-amino-acid polypeptide reads, in one-letter code: AKSRSSRAGLQFPVGRVHRFLRKGNYAQRVGAGAPVYLAAVFEYLAAEILELAGNAAPDNKKTRIIPRHLQLAIRNDEELNKLLGGVTIAQGGVLPNIQAVLLPKKTAKSSK.

Glutamine 91 is subject to N5-methylglutamine. A Glycyl lysine isopeptide (Lys-Gly) (interchain with G-Cter in ubiquitin) cross-link involves residue lysine 106.

Belongs to the histone H2A family. As to quaternary structure, the nucleosome is a histone octamer containing two molecules each of H2A, H2B, H3 and H4 assembled in one H3-H4 heterotetramer and two H2A-H2B heterodimers. The octamer wraps approximately 147 bp of DNA. Monoubiquitination gives a specific tag for epigenetic transcriptional repression.

It localises to the nucleus. The protein resides in the chromosome. Its function is as follows. Core component of nucleosome. Nucleosomes wrap and compact DNA into chromatin, limiting DNA accessibility to the cellular machineries which require DNA as a template. Histones thereby play a central role in transcription regulation, DNA repair, DNA replication and chromosomal stability. DNA accessibility is regulated via a complex set of post-translational modifications of histones, also called histone code, and nucleosome remodeling. The protein is Histone H2A, sperm of Lytechinus pictus (Painted sea urchin).